The sequence spans 180 residues: Large ribosomal subunit protein uL5 (180 aa).

This sequence belongs to the universal ribosomal protein uL5 family. Part of the 50S ribosomal subunit; part of the 5S rRNA/L5/L18/L25 subcomplex. Contacts the 5S rRNA and the P site tRNA. Forms a bridge to the 30S subunit in the 70S ribosome.

Functionally, this is one of the proteins that bind and probably mediate the attachment of the 5S RNA into the large ribosomal subunit, where it forms part of the central protuberance. In the 70S ribosome it contacts protein S13 of the 30S subunit (bridge B1b), connecting the 2 subunits; this bridge is implicated in subunit movement. Contacts the P site tRNA; the 5S rRNA and some of its associated proteins might help stabilize positioning of ribosome-bound tRNAs. The chain is Large ribosomal subunit protein uL5 from Lactobacillus johnsonii (strain CNCM I-12250 / La1 / NCC 533).